A 79-amino-acid chain; its full sequence is Acyl carrier protein (79 aa).

In terms of domain architecture, Carrier spans 2–77 (SDIADKVKKI…DAIDYIEKQK (76 aa)). Residue S37 is modified to O-(pantetheine 4'-phosphoryl)serine.

It belongs to the acyl carrier protein (ACP) family. In terms of processing, 4'-phosphopantetheine is transferred from CoA to a specific serine of apo-ACP by AcpS. This modification is essential for activity because fatty acids are bound in thioester linkage to the sulfhydryl of the prosthetic group.

It is found in the cytoplasm. The protein operates within lipid metabolism; fatty acid biosynthesis. Functionally, carrier of the growing fatty acid chain in fatty acid biosynthesis. The chain is Acyl carrier protein from Gluconobacter oxydans (strain 621H) (Gluconobacter suboxydans).